The chain runs to 90 residues: Progonadoliberin-3 (90 aa).

The N-terminal stretch at 1-23 (MEAGSRVIMQVLLLALVVQVTLS) is a signal peptide. Gln-24 bears the Pyrrolidone carboxylic acid mark. Position 33 is a glycine amide (Gly-33).

This sequence belongs to the GnRH family. Expressed only in the terminal nerve nucleus of the telencephalon.

It is found in the secreted. In terms of biological role, stimulates the secretion of gonadotropins. In Haplochromis burtoni (Burton's mouthbrooder), this protein is Progonadoliberin-3 (gnrh3).